Reading from the N-terminus, the 508-residue chain is DNA polymerase II small subunit (508 aa).

The segment covering 66 to 80 has biased composition (low complexity); sequence ASSAAQTSAPASTPP. Residues 66–122 are disordered; the sequence is ASSAAQTSAPASTPPDEATTHTDPSATDTPPNHDGGRAATADARSVEIDGDMTGAST. Positions 86-95 are enriched in polar residues; sequence HTDPSATDTP.

The protein belongs to the DNA polymerase delta/II small subunit family. In terms of assembly, heterodimer of a large subunit and a small subunit.

It carries out the reaction DNA(n) + a 2'-deoxyribonucleoside 5'-triphosphate = DNA(n+1) + diphosphate. It catalyses the reaction Exonucleolytic cleavage in the 3'- to 5'-direction to yield nucleoside 5'-phosphates.. Its function is as follows. Possesses two activities: a DNA synthesis (polymerase) and an exonucleolytic activity that degrades single-stranded DNA in the 3' to 5' direction. Has a template-primer preference which is characteristic of a replicative DNA polymerase. The polypeptide is DNA polymerase II small subunit (Halobacterium salinarum (strain ATCC 29341 / DSM 671 / R1)).